Consider the following 844-residue polypeptide: Striatin-interacting proteins 2 (844 aa).

The span at 1–18 shows a compositional bias: low complexity; sequence MDDPAAPGPAGSPANDNG. A disordered region spans residues 1–58; sequence MDDPAAPGPAGSPANDNGNGNGNGNGNGNGGKGKPAVPKGRETFRNQRRESEGSVDCP. The segment covering 19–33 has biased composition (gly residues); it reads NGNGNGNGNGNGGKG. The span at 39–52 shows a compositional bias: basic and acidic residues; the sequence is KGRETFRNQRRESE. Ser328, Ser339, and Ser364 each carry phosphoserine. Residues 331-355 are disordered; that stretch reads SYTLDLGESQLAPPPSKLRGRRGSR. Residues 370–422 form a disordered region; sequence ERDLFKTEEPATEEEEESAADGERTLDGELDLLEQDPLVPPPPSQTPLSTDRV. Over residues 379–389 the composition is skewed to acidic residues; that stretch reads PATEEEEESAA.

The protein belongs to the STRIP family. Part of the core of STRIPAK complexes composed of PP2A catalytic and scaffolding subunits, the striatins (PP2A regulatory subunits), the striatin-associated proteins MOB4, STRIP1 and STRIP2, PDCD10 and members of the STE20 kinases, such as STK24 and STK26. Interacts with CTTNBP2NL.

The protein resides in the cytoplasm. Its function is as follows. Plays a role in the regulation of cell morphology and cytoskeletal organization. Required in the control of cell shape. Calmodulin-binding scaffolding protein which is the center of the striatin-interacting phosphatase and kinase (STRIPAK) complexes. STRIPAK complexes have critical roles in protein (de)phosphorylation and are regulators of multiple signaling pathways including Hippo, MAPK, nuclear receptor and cytoskeleton remodeling. Different types of STRIPAK complexes are involved in a variety of biological processes such as cell growth, differentiation, apoptosis, metabolism and immune regulation. The polypeptide is Striatin-interacting proteins 2 (Strip2) (Mus musculus (Mouse)).